The sequence spans 780 residues: RNA-binding protein Pasilla (780 aa).

3 disordered regions span residues 31–50 (LQHQNQHNSSPQQPQHQQLE), 76–113 (QPRHSTTTSSPSSTHSLASGGGSSSNSSNSSSSDSSSI), and 150–190 (QIES…ATAS). Composition is skewed to low complexity over residues 79-91 (HSTTTSSPSSTHS), 99-113 (SSNSSNSSSSDSSSI), and 176-190 (PNGTPGAQTPTATAS). KH domains are found at residues 273–340 (TYHM…MEFI), 366–432 (DKQV…CKMI), and 691–758 (KDSK…QYLI). Residues 674 to 693 (AQLGGLSKSPTPGDLSSKDS) form a disordered region. The segment at 686–776 (GDLSSKDSKN…TKRARQIPLT (91 aa)) is required for RNA binding.

As to expression, expressed in the central nervous system in mushroom body neurons (at protein level).

It localises to the nucleus. The protein resides in the cytoplasm. In terms of biological role, functions to regulate alternative splicing in neurons by binding pre-mRNA in a sequence-specific manner to activate exon inclusion. Plays a role in long-term memory formation by processing the unspliced Orb2-isoform A (Orb2A) mRNA and thereby controlling Orb2A protein abundance. The protein is RNA-binding protein Pasilla of Drosophila melanogaster (Fruit fly).